Reading from the N-terminus, the 158-residue chain is EOLA-like protein (158 aa).

The 87-residue stretch at 6–92 (LSFRQPYAGF…IAGLVDIGET (87 aa)) folds into the ASCH domain.

The protein belongs to the EOLA family.

This is EOLA-like protein from Pongo abelii (Sumatran orangutan).